Consider the following 130-residue polypeptide: MLKTLPPTLREKKRYVALEIIFEEELFQKDVIAIVRNALMNYSGVLGCSRTNPWLIDYNHPYGILRISREEVNNLRSSLSLTNEHRKKPINIHIIGISNSVKHVREKFLHVPHEPYYKVIQKLKKKGPKK.

It belongs to the eukaryotic/archaeal RNase P protein component 2 family. As to quaternary structure, consists of a catalytic RNA component and at least 4-5 protein subunits.

Its subcellular location is the cytoplasm. It carries out the reaction Endonucleolytic cleavage of RNA, removing 5'-extranucleotides from tRNA precursor.. Part of ribonuclease P, a protein complex that generates mature tRNA molecules by cleaving their 5'-ends. The sequence is that of Ribonuclease P protein component 2 from Methanococcus maripaludis (strain C5 / ATCC BAA-1333).